The sequence spans 613 residues: Ribosome-associated molecular chaperone SSB1 (613 aa).

The tract at residues 1–391 (MAEGVFQGAI…ILTGQSTSED (391 aa)) is nucleotide binding domain (NBD). Residues 16 to 18 (TTY), K73, 205 to 207 (GGT), 271 to 278 (ERAKRTLS), and G342 each bind ATP. An inter-domain linker region spans residues 392 to 402 (TKDLLLLDVAP). The segment at 403–613 (LSLGVGMQGD…RVVTKAMSSR (211 aa)) is substrate binding domain (SBD). The lid domain (SBDalpha) stretch occupies residues 516–612 (SDEIEKMVNQ…KRVVTKAMSS (97 aa)). The short motif at 574 to 582 (IESALSDAL) is the Nuclear export signal element.

Belongs to the heat shock protein 70 family. Ssb-type Hsp70 subfamily. In terms of assembly, binds to ribosomes. Binds close to the ribosomal tunnel exit via contacts with both ribosomal proteins and rRNA. Directly interacts with nascent polypeptides. This interaction is dependent on the ribosome-associated complex (RAC). Interacts with SSE1. Interacts with FES1.

The protein resides in the cytoplasm. The enzyme catalyses ATP + H2O = ADP + phosphate + H(+). Its function is as follows. Ribosome-bound, Hsp70-type chaperone that assists in the cotranslational folding of newly synthesized proteins in the cytosol. Stimulates folding by interacting with nascent chains, binding to short, largely hydrophobic sequences exposed by unfolded proteins, thereby stabilizing longer, more slowly translated, and aggregation-prone nascent polypeptides and domains that cannot fold stably until fully synthesized. The Hsp70-protein substrate interaction depends on ATP-binding and on allosteric regulation between the NBD and the SBD. The ATP-bound state is characterized by a fast exchange rate of substrate (low affinity state), while in the ADP-bound state exchange is much slower (high affinity state). During the Hsp70 cycle, the chaperone switches between the ATP-bound state (open conformation) and the ADP-bound state (closed conformation) by major conformational rearrangements involving mainly the lid domain. Ssb cooperates with a specific Hsp40/Hsp70 co-chaperone termed the ribosome-associated complex (RAC), which stimulates the ATPase activity of the ribosome-associated pool of Ssbs and switches it to the high affinity substrate binding state. Hsp110 chaperone SSE1 and FES1 act as nucleotide exchange factors that cause substrate release. This chain is Ribosome-associated molecular chaperone SSB1 (SSB1), found in Zygosaccharomyces rouxii (strain ATCC 2623 / CBS 732 / NBRC 1130 / NCYC 568 / NRRL Y-229).